A 299-amino-acid polypeptide reads, in one-letter code: 6-phosphogluconate dehydrogenase, NAD(+)-dependent, decarboxylating (299 aa).

NAD(+) contacts are provided by residues 7 to 12 (GLGRMG), 67 to 69 (VPA), and asparagine 95. Asparagine 95, serine 118, and glycine 120 together coordinate substrate. Lysine 169 (proton acceptor) is an active-site residue. Residue 172-173 (HN) participates in substrate binding. Glutamate 176 serves as the catalytic Proton donor. Substrate contacts are provided by tyrosine 177 and arginine 268.

The protein belongs to the 6-phosphogluconate dehydrogenase family. Homotetramer.

It carries out the reaction 6-phospho-D-gluconate + NAD(+) = D-ribulose 5-phosphate + CO2 + NADH. Its pathway is carbohydrate degradation; pentose phosphate pathway. Functionally, catalyzes the oxidative decarboxylation of 6-phosphogluconate to ribulose 5-phosphate and CO(2), with concomitant reduction of NAD to NADH. This Haloferax volcanii (strain ATCC 29605 / DSM 3757 / JCM 8879 / NBRC 14742 / NCIMB 2012 / VKM B-1768 / DS2) (Halobacterium volcanii) protein is 6-phosphogluconate dehydrogenase, NAD(+)-dependent, decarboxylating.